A 312-amino-acid polypeptide reads, in one-letter code: D-alanine--D-alanine ligase (312 aa).

The region spanning 103–303 (KQQLVPHGIR…YADLVQAIVD (201 aa)) is the ATP-grasp domain. 130-186 (MPRPYVLKPVNEGSSVGVAIIKERDNHGVPIHRDSHGPWQTFATLLAEPFIRGRELT) provides a ligand contact to ATP. Mg(2+) contacts are provided by Asp254, Glu270, and Asn272.

It belongs to the D-alanine--D-alanine ligase family. Mg(2+) is required as a cofactor. Mn(2+) serves as cofactor.

Its subcellular location is the cytoplasm. It catalyses the reaction 2 D-alanine + ATP = D-alanyl-D-alanine + ADP + phosphate + H(+). It participates in cell wall biogenesis; peptidoglycan biosynthesis. Its function is as follows. Cell wall formation. The sequence is that of D-alanine--D-alanine ligase from Rhizorhabdus wittichii (strain DSM 6014 / CCUG 31198 / JCM 15750 / NBRC 105917 / EY 4224 / RW1) (Sphingomonas wittichii).